Reading from the N-terminus, the 309-residue chain is 4-hydroxy-3-methylbut-2-enyl diphosphate reductase (309 aa).

[4Fe-4S] cluster is bound at residue C12. The (2E)-4-hydroxy-3-methylbut-2-enyl diphosphate site is built by H41 and H74. Dimethylallyl diphosphate-binding residues include H41 and H74. Positions 41 and 74 each coordinate isopentenyl diphosphate. Residue C96 coordinates [4Fe-4S] cluster. A (2E)-4-hydroxy-3-methylbut-2-enyl diphosphate-binding site is contributed by H124. Residue H124 coordinates dimethylallyl diphosphate. H124 is an isopentenyl diphosphate binding site. Catalysis depends on E126, which acts as the Proton donor. Residue T167 coordinates (2E)-4-hydroxy-3-methylbut-2-enyl diphosphate. C197 is a binding site for [4Fe-4S] cluster. Positions 225, 226, 227, and 269 each coordinate (2E)-4-hydroxy-3-methylbut-2-enyl diphosphate. S225, S226, N227, and S269 together coordinate dimethylallyl diphosphate. S225, S226, N227, and S269 together coordinate isopentenyl diphosphate.

It belongs to the IspH family. The cofactor is [4Fe-4S] cluster.

It catalyses the reaction isopentenyl diphosphate + 2 oxidized [2Fe-2S]-[ferredoxin] + H2O = (2E)-4-hydroxy-3-methylbut-2-enyl diphosphate + 2 reduced [2Fe-2S]-[ferredoxin] + 2 H(+). The catalysed reaction is dimethylallyl diphosphate + 2 oxidized [2Fe-2S]-[ferredoxin] + H2O = (2E)-4-hydroxy-3-methylbut-2-enyl diphosphate + 2 reduced [2Fe-2S]-[ferredoxin] + 2 H(+). It participates in isoprenoid biosynthesis; dimethylallyl diphosphate biosynthesis; dimethylallyl diphosphate from (2E)-4-hydroxy-3-methylbutenyl diphosphate: step 1/1. The protein operates within isoprenoid biosynthesis; isopentenyl diphosphate biosynthesis via DXP pathway; isopentenyl diphosphate from 1-deoxy-D-xylulose 5-phosphate: step 6/6. Its function is as follows. Catalyzes the conversion of 1-hydroxy-2-methyl-2-(E)-butenyl 4-diphosphate (HMBPP) into a mixture of isopentenyl diphosphate (IPP) and dimethylallyl diphosphate (DMAPP). Acts in the terminal step of the DOXP/MEP pathway for isoprenoid precursor biosynthesis. The sequence is that of 4-hydroxy-3-methylbut-2-enyl diphosphate reductase from Colwellia psychrerythraea (strain 34H / ATCC BAA-681) (Vibrio psychroerythus).